A 189-amino-acid chain; its full sequence is UPF0301 protein PputW619_0469 (189 aa).

This sequence belongs to the UPF0301 (AlgH) family.

The polypeptide is UPF0301 protein PputW619_0469 (Pseudomonas putida (strain W619)).